We begin with the raw amino-acid sequence, 264 residues long: Glutamate racemase 2 (264 aa).

Substrate-binding positions include 10–11 (DS) and 42–43 (YG). The Proton donor/acceptor role is filled by Cys-73. 74-75 (NT) lines the substrate pocket. Catalysis depends on Cys-181, which acts as the Proton donor/acceptor. 182–183 (TH) contacts substrate.

This sequence belongs to the aspartate/glutamate racemases family.

It catalyses the reaction L-glutamate = D-glutamate. The protein operates within cell wall biogenesis; peptidoglycan biosynthesis. In terms of biological role, provides the (R)-glutamate required for cell wall biosynthesis. The polypeptide is Glutamate racemase 2 (Caldanaerobacter subterraneus subsp. tengcongensis (strain DSM 15242 / JCM 11007 / NBRC 100824 / MB4) (Thermoanaerobacter tengcongensis)).